The chain runs to 421 residues: Synaptotagmin-12 (421 aa).

At Met-1–Gly-18 the chain is on the vesicular side. A helical transmembrane segment spans residues Trp-19–Leu-39. The Cytoplasmic segment spans residues Trp-40–Asn-421. Phosphoserine is present on residues Ser-97, Ser-99, and Ser-214. C2 domains follow at residues Thr-152 to Leu-272 and Ala-283 to His-416.

Belongs to the synaptotagmin family. In terms of assembly, homodimer. Can also form heterodimers. Interacts with SYT1. In terms of processing, phosphorylation of Ser-97 is required for mossy-fiber long-term potentiation.

It localises to the cytoplasmic vesicle. The protein localises to the secretory vesicle. It is found in the synaptic vesicle membrane. Functionally, synaptic vesicle phosphoprotein that enhances spontaneous neurotransmitter release but does not effect induced neurotransmitter release. Unlike other synaptotagmins, it does not bind Ca(2+) or phospholipids. Essential for mossy-fiber long-term potentiation in the hippocampus. This Homo sapiens (Human) protein is Synaptotagmin-12 (SYT12).